A 463-amino-acid chain; its full sequence is Retinoic acid receptor RXR-gamma (463 aa).

The interval 1–138 (MYGNYSHFMK…TSPGSLVKHI (138 aa)) is modulating. The tract at residues 16 to 53 (GGSPGHTGSTSMSPSVALPTGKPMDSHPSYTDTPVSAP) is disordered. NR C4-type zinc fingers lie at residues 139-159 (CAIC…CEGC) and 175-199 (CRDN…YQKC). The nuclear receptor DNA-binding region spans 139–204 (CAICGDRSSG…RYQKCLVMGM (66 aa)). A hinge region spans residues 205–230 (KREAVQEERQRSRERAESEAECASTG). The 229-residue stretch at 231-459 (HEDMPVERIL…TFLMEMLETP (229 aa)) folds into the NR LBD domain.

Belongs to the nuclear hormone receptor family. NR2 subfamily. In terms of assembly, homodimer. Heterodimer with a RAR molecule. Binds DNA preferentially as a RAR/RXR heterodimer. Interacts with RARA. Post-translationally, acetylated by EP300. In terms of tissue distribution, expressed in the liver, but not detected in the adrenal gland (at protein level). Restricted expression in adrenal gland, kidney, liver, brain and lungs. Strong expression in heart and muscles.

The protein resides in the nucleus. Its subcellular location is the cytoplasm. Its function is as follows. Receptor for retinoic acid. Retinoic acid receptors bind as heterodimers to their target response elements in response to their ligands, all-trans or 9-cis retinoic acid, and regulate gene expression in various biological processes. The RAR/RXR heterodimers bind to the retinoic acid response elements (RARE) composed of tandem 5'-AGGTCA-3' sites known as DR1-DR5. The high affinity ligand for RXRs is 9-cis retinoic acid. The sequence is that of Retinoic acid receptor RXR-gamma (Rxrg) from Rattus norvegicus (Rat).